Consider the following 204-residue polypeptide: Ribosome maturation factor RimP (204 aa).

The interval 177–204 (NFDESQFDEIQETEGEEADEAETPITRH) is disordered. Over residues 181 to 198 (SQFDEIQETEGEEADEAE) the composition is skewed to acidic residues.

It belongs to the RimP family.

Its subcellular location is the cytoplasm. Functionally, required for maturation of 30S ribosomal subunits. The chain is Ribosome maturation factor RimP from Cereibacter sphaeroides (strain ATCC 17025 / ATH 2.4.3) (Rhodobacter sphaeroides).